Consider the following 190-residue polypeptide: Negative regulator YfiR (190 aa).

Residue Arg-60 coordinates GMP. 2 disulfide bridges follow: Cys-71–Cys-110 and Cys-145–Cys-152. GMP is bound by residues Arg-175 and His-177.

Homodimer. Interacts with TpbB/YfiN. Interacts with YfiB. The YfiB-YfiR complex is a 2:2 heterotetramer. Post-translationally, cys-71 and Cys-110 form a disulfide bond in the oxidized form but maintain their free form in the non-oxidized YfiR structure. The Cys-145-Cys-152 disulfide bond is well formed in both structures. The Cys145-Cys152 disulfide bond, but not Cys-71-Cys-110, plays an important role in maintaining the correct folding of the protein.

It localises to the periplasm. TpbB/YfiN repression is released through an YfiB-dependent sequestration of YfiR to the outer membrane. Binds vitamin B6 (VB6) or L-Trp at the periphery of the dimer, and both VB6 and L-Trp are able to reduce biofilm formation induced by YfiB L43P mutant. However, VB6 or L-Trp alone may have little effects in interrupting the YfiB-YfiR interaction. GMP enhances the binding affinity between YfiB and YfiR. Negatively regulates the activity of the diguanylate cyclase TpbB/YfiN, leading to decreased c-di-GMP production. Inhibits TpbB/YfiN allosterically, through a hydrophobic interaction between the C-terminus of YfiR and a conserved region of the periplasmic PAS domain of TpbB/YfiN. Under reducing conditions, may also act as an YfiB-independent sensing device that is able to activate TpbB/YfiN in response to the redox status of the periplasm. In terms of biological role, part of the YfiB-TpbB-YfiR (or yfiBNR) system, encoding a tripartite signaling module that modulates intracellular c-di-GMP levels. The system is a key regulator of the small colony variant (SCV) phenotype, and plays an important role in biofilm formation and in vivo persistence. The c-di-GMP produced by TpbB/YfiN stimulates the production of the Pel and Psl exopolysaccharides, which promotes surface attachment, generates an SCV phenotype and confers resistance against phagocytosis. This is Negative regulator YfiR from Pseudomonas aeruginosa (strain ATCC 15692 / DSM 22644 / CIP 104116 / JCM 14847 / LMG 12228 / 1C / PRS 101 / PAO1).